The primary structure comprises 415 residues: Probable G-protein coupled receptor 19 (415 aa).

At 1-69 (MVFAHRMDND…LNPGEVATAS (69 aa)) the chain is on the extracellular side. N-linked (GlcNAc...) asparagine glycans are attached at residues Asn-25 and Asn-52. A helical membrane pass occupies residues 70–90 (IFFGALWLFSIFGNSLVCLVI). Residues 91–102 (HRSRRTQSTTNY) lie on the Cytoplasmic side of the membrane. The helical transmembrane segment at 103 to 123 (FVVSMACADLLISVASTPFVV) threads the bilayer. At 124–152 (LQFTTGRWTLGSAMCKVVRYFQYLTPGVQ) the chain is on the extracellular side. Cys-138 and Cys-210 form a disulfide bridge. A helical membrane pass occupies residues 153–173 (IYVLLSICIDRFYTIVYPLSF). Topologically, residues 174 to 182 (KVSREKAKK) are cytoplasmic. The chain crosses the membrane as a helical span at residues 183 to 203 (MIAASWILDAAFVTPVFFFYG). The Extracellular portion of the chain corresponds to 204-221 (SNWDSHCNYFLPPSWEGT). The chain crosses the membrane as a helical span at residues 222–242 (AYTVIHFLVGFVIPSILIILF). At 243-277 (YQKVIKYIWRIGTDGRTLRRTMNIVPRTKVKTVKM) the chain is on the cytoplasmic side. A helical transmembrane segment spans residues 278–298 (FLLLNLVFLFSWLPFHVAQLW). Residues 299–309 (HPHEQDYKKSS) are Extracellular-facing. Residues 310–332 (LVFTAVTWVSFSSSASKPTLYSI) traverse the membrane as a helical segment. The Cytoplasmic portion of the chain corresponds to 333 to 415 (YNANFRRGMK…INSNPPNTFV (83 aa)).

This sequence belongs to the G-protein coupled receptor 1 family. In terms of tissue distribution, strongly expressed in the brain.

It is found in the cell membrane. Functionally, G-protein coupled receptor that plays a role in the regulation of circadian rhythms and energy metabolism. Participates in maintaining proper circadian gene expression in the suprachiasmatic nucleus (SCN), the locus of the master circadian clock in the brain. May function as a coordinator of aging-associated metabolic dysfunction, stress response, DNA integrity management, and eventual senescence. Upon binding to adropin, modulates mitochondrial energy metabolism via the p44/42-PDK4 signaling pathway, influencing pyruvate dehydrogenase activity. The sequence is that of Probable G-protein coupled receptor 19 (Gpr19) from Mus musculus (Mouse).